The sequence spans 180 residues: ATP synthase subunit b (180 aa).

A helical membrane pass occupies residues 26–48 (SMILFWKAVNTVILLGLVYYFGG).

This sequence belongs to the ATPase B chain family. As to quaternary structure, F-type ATPases have 2 components, F(1) - the catalytic core - and F(0) - the membrane proton channel. F(1) has five subunits: alpha(3), beta(3), gamma(1), delta(1), epsilon(1). F(0) has three main subunits: a(1), b(2) and c(10-14). The alpha and beta chains form an alternating ring which encloses part of the gamma chain. F(1) is attached to F(0) by a central stalk formed by the gamma and epsilon chains, while a peripheral stalk is formed by the delta and b chains.

It is found in the cell inner membrane. In terms of biological role, f(1)F(0) ATP synthase produces ATP from ADP in the presence of a proton or sodium gradient. F-type ATPases consist of two structural domains, F(1) containing the extramembraneous catalytic core and F(0) containing the membrane proton channel, linked together by a central stalk and a peripheral stalk. During catalysis, ATP synthesis in the catalytic domain of F(1) is coupled via a rotary mechanism of the central stalk subunits to proton translocation. Component of the F(0) channel, it forms part of the peripheral stalk, linking F(1) to F(0). The polypeptide is ATP synthase subunit b (Sulfurihydrogenibium sp. (strain YO3AOP1)).